Reading from the N-terminus, the 668-residue chain is UvrABC system protein B (668 aa).

Positions 36 to 276 (DNIKGGEKAQ…EEAIKNIMEE (241 aa)) constitute a Helicase ATP-binding domain. An ATP-binding site is contributed by 49 to 56 (GATGTGKT). Positions 102–125 (YYDYYQPEAYVPSSDTYIEKDSSV) match the Beta-hairpin motif. Positions 440-606 (QMDDLLGEIN…TIKKEIRDLI (167 aa)) constitute a Helicase C-terminal domain. Positions 632 to 667 (QEAIKKLQKQMHEAAELLDFELAAQIRDMVLELKSM) constitute a UVR domain.

This sequence belongs to the UvrB family. Forms a heterotetramer with UvrA during the search for lesions. Interacts with UvrC in an incision complex.

The protein resides in the cytoplasm. Its function is as follows. The UvrABC repair system catalyzes the recognition and processing of DNA lesions. A damage recognition complex composed of 2 UvrA and 2 UvrB subunits scans DNA for abnormalities. Upon binding of the UvrA(2)B(2) complex to a putative damaged site, the DNA wraps around one UvrB monomer. DNA wrap is dependent on ATP binding by UvrB and probably causes local melting of the DNA helix, facilitating insertion of UvrB beta-hairpin between the DNA strands. Then UvrB probes one DNA strand for the presence of a lesion. If a lesion is found the UvrA subunits dissociate and the UvrB-DNA preincision complex is formed. This complex is subsequently bound by UvrC and the second UvrB is released. If no lesion is found, the DNA wraps around the other UvrB subunit that will check the other stand for damage. In Streptococcus thermophilus (strain ATCC BAA-491 / LMD-9), this protein is UvrABC system protein B.